Consider the following 544-residue polypeptide: Carboxypeptidase Y homolog A (544 aa).

A signal peptide spans 1 to 17; the sequence is MKSLALALLVGGAIASG. Positions 18-124 are excised as a propeptide; the sequence is PQQQVLREPV…RLDTYDLRVK (107 aa). 5 disulfide bridges follow: C178/C417, C312/C326, C336/C359, C343/C352, and C381/C387. Residue N209 is glycosylated (N-linked (GlcNAc...) asparagine). S265 is an active-site residue. D456 is a catalytic residue. N-linked (GlcNAc...) asparagine glycosylation occurs at N506. The active site involves H517.

This sequence belongs to the peptidase S10 family.

The protein localises to the vacuole. The catalysed reaction is Release of a C-terminal amino acid with broad specificity.. Functionally, vacuolar carboxypeptidase involved in degradation of small peptides. Digests preferentially peptides containing an aliphatic or hydrophobic residue in P1' position, as well as methionine, leucine or phenylalanine in P1 position of ester substrate. The polypeptide is Carboxypeptidase Y homolog A (CPYA) (Ajellomyces capsulatus (strain G186AR / H82 / ATCC MYA-2454 / RMSCC 2432) (Darling's disease fungus)).